Reading from the N-terminus, the 378-residue chain is Phospho-N-acetylmuramoyl-pentapeptide-transferase (378 aa).

The next 10 helical transmembrane spans lie at 27-47 (TAFA…WLIN), 74-94 (TMGG…WADL), 96-116 (YPYV…GFLD), 135-155 (LVYQ…MRAY), 184-204 (WTYV…VVFY), 216-236 (GLAI…AYAG), 256-276 (LTIF…YNAH), 280-300 (IFMG…VAVL), 305-325 (ILLL…ILQV), and 355-375 (KIIA…LTTL).

This sequence belongs to the glycosyltransferase 4 family. MraY subfamily. It depends on Mg(2+) as a cofactor.

It localises to the cell inner membrane. The catalysed reaction is UDP-N-acetyl-alpha-D-muramoyl-L-alanyl-gamma-D-glutamyl-meso-2,6-diaminopimeloyl-D-alanyl-D-alanine + di-trans,octa-cis-undecaprenyl phosphate = di-trans,octa-cis-undecaprenyl diphospho-N-acetyl-alpha-D-muramoyl-L-alanyl-D-glutamyl-meso-2,6-diaminopimeloyl-D-alanyl-D-alanine + UMP. It participates in cell wall biogenesis; peptidoglycan biosynthesis. Functionally, catalyzes the initial step of the lipid cycle reactions in the biosynthesis of the cell wall peptidoglycan: transfers peptidoglycan precursor phospho-MurNAc-pentapeptide from UDP-MurNAc-pentapeptide onto the lipid carrier undecaprenyl phosphate, yielding undecaprenyl-pyrophosphoryl-MurNAc-pentapeptide, known as lipid I. This Solibacter usitatus (strain Ellin6076) protein is Phospho-N-acetylmuramoyl-pentapeptide-transferase.